The chain runs to 251 residues: Sugar fermentation stimulation protein homolog (251 aa).

The protein belongs to the SfsA family.

This is Sugar fermentation stimulation protein homolog from Yersinia pseudotuberculosis serotype O:1b (strain IP 31758).